Here is a 161-residue protein sequence, read N- to C-terminus: MPSFDVVSELDKHEVQNAVENAIKELDRRYDLKGKGSFEFKEKEQTVLLTAEAEFQLEAMIEILRLALVKRKIDVKCLETKDAYASGKEMKQEAKFREGIDKELAKKIVAHIKDAKLKVQAAIQGEQVRVTGKKRDDLQEAIAALRAKEFDMPLQFNNFRD.

It belongs to the YajQ family.

Nucleotide-binding protein. This chain is Nucleotide-binding protein PputW619_0959, found in Pseudomonas putida (strain W619).